Consider the following 103-residue polypeptide: Large ribosomal subunit protein bL36m (103 aa).

Belongs to the bacterial ribosomal protein bL36 family. Component of the mitochondrial large ribosomal subunit (mt-LSU). Mature mammalian 55S mitochondrial ribosomes consist of a small (28S) and a large (39S) subunit. The 28S small subunit contains a 12S ribosomal RNA (12S mt-rRNA) and 30 different proteins. The 39S large subunit contains a 16S rRNA (16S mt-rRNA), a copy of mitochondrial valine transfer RNA (mt-tRNA(Val)), which plays an integral structural role, and 52 different proteins. bL36m has a zinc binding site.

It localises to the mitochondrion. The sequence is that of Large ribosomal subunit protein bL36m (MRPL36) from Homo sapiens (Human).